Consider the following 99-residue polypeptide: DNA-directed RNA polymerase subunit Rpo11 (99 aa).

Belongs to the archaeal Rpo11/eukaryotic RPB11/RPC19 RNA polymerase subunit family. In terms of assembly, part of the RNA polymerase complex. Forms an Rpo3-Rpo10-Rpo11-Rpo12 complex upon coexpression.

It localises to the cytoplasm. The enzyme catalyses RNA(n) + a ribonucleoside 5'-triphosphate = RNA(n+1) + diphosphate. Functionally, DNA-dependent RNA polymerase (RNAP) catalyzes the transcription of DNA into RNA using the four ribonucleoside triphosphates as substrates. In Methanocaldococcus jannaschii (strain ATCC 43067 / DSM 2661 / JAL-1 / JCM 10045 / NBRC 100440) (Methanococcus jannaschii), this protein is DNA-directed RNA polymerase subunit Rpo11.